The chain runs to 250 residues: Leucyl/phenylalanyl-tRNA--protein transferase (250 aa).

This sequence belongs to the L/F-transferase family.

It localises to the cytoplasm. It carries out the reaction N-terminal L-lysyl-[protein] + L-leucyl-tRNA(Leu) = N-terminal L-leucyl-L-lysyl-[protein] + tRNA(Leu) + H(+). The catalysed reaction is N-terminal L-arginyl-[protein] + L-leucyl-tRNA(Leu) = N-terminal L-leucyl-L-arginyl-[protein] + tRNA(Leu) + H(+). It catalyses the reaction L-phenylalanyl-tRNA(Phe) + an N-terminal L-alpha-aminoacyl-[protein] = an N-terminal L-phenylalanyl-L-alpha-aminoacyl-[protein] + tRNA(Phe). In terms of biological role, functions in the N-end rule pathway of protein degradation where it conjugates Leu, Phe and, less efficiently, Met from aminoacyl-tRNAs to the N-termini of proteins containing an N-terminal arginine or lysine. This is Leucyl/phenylalanyl-tRNA--protein transferase from Cupriavidus necator (strain ATCC 17699 / DSM 428 / KCTC 22496 / NCIMB 10442 / H16 / Stanier 337) (Ralstonia eutropha).